A 778-amino-acid chain; its full sequence is Endonuclease MutS2 (778 aa).

328 to 335 (GPNTGGKT) is a binding site for ATP. Residues 702 to 777 (LDLRGKRYEE…GSGATIVTFK (76 aa)) enclose the Smr domain.

Belongs to the DNA mismatch repair MutS family. MutS2 subfamily. In terms of assembly, homodimer. Binds to stalled ribosomes, contacting rRNA.

In terms of biological role, endonuclease that is involved in the suppression of homologous recombination and thus may have a key role in the control of bacterial genetic diversity. Functionally, acts as a ribosome collision sensor, splitting the ribosome into its 2 subunits. Detects stalled/collided 70S ribosomes which it binds and splits by an ATP-hydrolysis driven conformational change. Acts upstream of the ribosome quality control system (RQC), a ribosome-associated complex that mediates the extraction of incompletely synthesized nascent chains from stalled ribosomes and their subsequent degradation. Probably generates substrates for RQC. This Streptococcus pneumoniae (strain CGSP14) protein is Endonuclease MutS2.